Here is a 124-residue protein sequence, read N- to C-terminus: Small ribosomal subunit protein bS6 (124 aa).

The disordered stretch occupies residues 99–124 (PLPAPRIVPGSEPEPVQQQEAAAVEA). A compositionally biased stretch (low complexity) spans 111 to 124 (PEPVQQQEAAAVEA).

The protein belongs to the bacterial ribosomal protein bS6 family.

Functionally, binds together with bS18 to 16S ribosomal RNA. This Prochlorococcus marinus (strain MIT 9313) protein is Small ribosomal subunit protein bS6.